Reading from the N-terminus, the 549-residue chain is Glucose-6-phosphate isomerase (549 aa).

The Proton donor role is filled by Glu-355. Catalysis depends on residues His-386 and Lys-514.

The protein belongs to the GPI family.

The protein resides in the cytoplasm. It catalyses the reaction alpha-D-glucose 6-phosphate = beta-D-fructose 6-phosphate. The protein operates within carbohydrate biosynthesis; gluconeogenesis. Its pathway is carbohydrate degradation; glycolysis; D-glyceraldehyde 3-phosphate and glycerone phosphate from D-glucose: step 2/4. Functionally, catalyzes the reversible isomerization of glucose-6-phosphate to fructose-6-phosphate. This chain is Glucose-6-phosphate isomerase, found in Desulfatibacillum aliphaticivorans.